Reading from the N-terminus, the 558-residue chain is Putative ABC transporter ATP-binding protein SMU_1934c (558 aa).

2 ABC transporter domains span residues 5–246 (IEFK…GIRE) and 295–527 (FDIQ…ANLK). Residues 39–46 (GPSGSGKS) and 328–335 (GKNGAGKS) each bind ATP.

It belongs to the ABC transporter superfamily.

Its subcellular location is the cell membrane. Its function is as follows. Probably part of an ABC transporter complex. Responsible for energy coupling to the transport system. This is Putative ABC transporter ATP-binding protein SMU_1934c (sdcBA) from Streptococcus mutans serotype c (strain ATCC 700610 / UA159).